We begin with the raw amino-acid sequence, 29 residues long: Dander allergen Equ c 2.0101 (29 aa).

Belongs to the calycin superfamily. Lipocalin family.

It localises to the secreted. This Equus caballus (Horse) protein is Dander allergen Equ c 2.0101.